A 448-amino-acid polypeptide reads, in one-letter code: MEGSKTSSSTMQVSFVCQRCSQPLKLDTSFKILDRVTIQELTAPLLATAQVKPGETQEEEANPGEEPFIETRQDGVSRRFIPPARMMSTESANSFTLIGEASDGGTMENLSRRLKVTGDLFDIMSGQTDVDHPLCEECTDTLLDQLDTQLNVTENECQNYKRCLEILEQMHEDDSEQLRMELRELALEEERLIQELEEVEKNRKIVAENLEKVQAEAERLDQEEAQYQREYSEFKRQQLELDDELKSVENQMRYAQMQLDKLKKTNVFNATFHIWHSGQFGTINNFRLGRLPSVPVEWNEINAAWGQTVLLLHALANKMGLKFQRYRLVPYGNHSYLESLTDKSKELPLYCSGGLRFFWDNKFDHAMVAFLDCVQQFKEEVEKGETRFCLPYRMDVEKGKIEDTGGSGGSYSIKTQFNSEEQWTKALKFMLTNLKWGLAWVSSQFYNK.

Position 1 is an N-acetylmethionine (Met1). A phosphoserine mark is found at Ser14 and Ser29. 3 positions are modified to phosphoserine; by AMPK: Ser88, Ser91, and Ser94. The short motif at 106-125 is the BH3 element; the sequence is TMENLSRRLKVTGDLFDIMS. Residues 110–157 are interaction with BCL2 and BCL2L1; sequence LSRRLKVTGDLFDIMSGQTDVDHPLCEECTDTLLDQLDTQLNVTENEC. At Thr117 the chain carries Phosphothreonine; by DAPK1. A coiled-coil region spans residues 140–267; that stretch reads DTLLDQLDTQ…QLDKLKKTNV (128 aa). An evolutionary conserved domain (ECD) region spans residues 243-448; it reads DELKSVENQM…AWVSSQFYNK (206 aa). Glycyl lysine isopeptide (Lys-Gly) (interchain with G-Cter in ubiquitin) cross-links involve residues Lys400 and Lys435. The required for membrane-association stretch occupies residues 423-448; that stretch reads WTKALKFMLTNLKWGLAWVSSQFYNK.

It belongs to the beclin family. A homodimeric form is proposed to exist; this metastable form readily transits to ATG14- or UVRAG-containing complexes with BECN1:UVRAG being more stable than BECN1:ATG14. Component of the PI3K (PI3KC3/PI3K-III/class III phosphatidylinositol 3-kinase) complex the core of which is composed of the catalytic subunit PIK3C3, the regulatory subunit PIK3R4 and BECN1 associating with additional regulatory/auxiliary subunits to form alternative complex forms. Alternative complex forms containing a fourth regulatory subunit in a mutually exclusive manner are PI3K complex I (PI3KC3-C1) containing ATG14, and PI3K complex II (PI3KC3-C2) containing UVRAG. PI3KC3-C1 displays a V-shaped architecture with PIK3R4 serving as a bridge between PIK3C3 and the ATG14:BECN1 subcomplex. Both, PI3KC3-C1 and PI3KC3-C2, can associate with further regulatory subunits, such as RUBCN, SH3GLB1/Bif-1 and AMBRA1. PI3KC3-C1 probably associates with PIK3CB. Forms a complex with PPP2CA and AMBRA1; AMBRA1 and BECN1 components of the complex regulate MYC stability via different pathways. Component of the complex, at least composed of LRPPRC, BECN1 and BCL2; the interactions prevent BECN1 from forming an autophagy-inducing complex with PIK3C3. Interacts with AMBRA1, GOPC, GRID2. Interacts with BCL2 and BCL2L1 isoform Bcl-X(L); the interaction inhibits BECN1 function in promoting autophagy by interfering with the formation of the PI3K complex. Interacts with cytosolic HMGB1; inhibits the interaction of BECN1 and BCL2 leading to promotion of autophagy. Interacts with USP10, USP13, VMP1, DAPK1, RAB39A. Interacts with the poly-Gln domain of ATXN3; the interaction causes deubiquitination at Lys-400 and stabilizes BECN1. Interacts with SLAMF1. Interacts with TRIM5; the interaction causes activation of BECN1 by causing its dissociation from its inhibitors BCL2 and TAB2. Interacts with active ULK1 (phosphorylated on 'Ser-317') and MEFV simultaneously. Interacts with WDR81 and WDR91; negatively regulates the PI3 kinase/PI3K activity associated with endosomal membranes. Interacts with LAPTM4B; competes with EGFR for LAPTM4B binding; regulates EGFR activity. Interacts with TRIM50. Interacts with TRIM16. Interacts with ATG14; this interaction is increased in the absence of TMEM39A. Interacts with WASHC1; preventing interaction with AMBRA1 and the DCX(AMBRA1) complex and subsequent ubiquitination. Interacts with TRIM17. Interacts with BCL2L10/BCL-B (via BH1 domain). Interacts with SH3BGRL. Interacts with IRGM; enhancing BECN1-interacting partners and influencing the composition of the BECN1 complex. Interacts with ARMC3. Interacts with LRPPRC. As to quaternary structure, (Microbial infection) Interacts with African swine fever virus (ASFV) apoptosis regulator Bcl-2 homolog; this interaction allows the virus to inhibit BECN1, and thus autophagy. Phosphorylation at Thr-117 by DAPK1 reduces its interaction with BCL2 and BCL2L1 and promotes induction of autophagy. In response to autophagic stimuli, phosphorylated at serine residues by AMPK in an ATG14-dependent manner, and this phosphorylation is critical for maximally efficient autophagy. Post-translationally, polyubiquitinated by NEDD4, both with 'Lys-11'- and 'Lys-63'-linkages. 'Lys-11'-linked polyubiquitination leads to degradation and is enhanced when the stabilizing interaction partner VPS34 is depleted. Deubiquitinated by USP10 and USP13, leading to stabilize the PIK3C3/VPS34-containing complexes. Polyubiquitinated at Lys-400 with 'Lys-48'-linkages. 'Lys-48'-linked polyubiquitination of Lys-400 leads to degradation. Deubiquitinated by ATXN3, leading to stabilization. Ubiquitinated at Lys-435 via 'Lys-63'-linkage by the DCX(AMBRA1) complex, thereby increasing the association between BECN1 and PIK3C3 to promote PIK3C3 activity. 'Lys-48'-linked ubiquitination by RNF216 leads to proteasomal degradation and autophagy inhibition. In terms of processing, proteolytically processed by caspases including CASP8 and CASP3; the C-terminal fragments lack autophagy-inducing capacity and are proposed to induce apoptosis. Thus the cleavage is proposed to be an determinant to switch from autophagy to apoptosis pathways affecting cellular homeostasis including viral infections and survival of tumor cells.

The protein resides in the cytoplasm. It is found in the golgi apparatus. Its subcellular location is the trans-Golgi network membrane. It localises to the endosome membrane. The protein localises to the endoplasmic reticulum membrane. The protein resides in the mitochondrion membrane. It is found in the cytoplasmic vesicle. Its subcellular location is the autophagosome. It localises to the mitochondrion. The protein localises to the nucleus. Functionally, plays a central role in autophagy. Acts as a core subunit of the PI3K complex that mediates formation of phosphatidylinositol 3-phosphate; different complex forms are believed to play a role in multiple membrane trafficking pathways: PI3KC3-C1 is involved in initiation of autophagosomes and PI3KC3-C2 in maturation of autophagosomes and endocytosis. Involved in regulation of degradative endocytic trafficking and required for the abscission step in cytokinesis, probably in the context of PI3KC3-C2. Essential for the formation of PI3KC3-C2 but not PI3KC3-C1 PI3K complex forms. Involved in endocytosis. May play a role in antiviral host defense. Its function is as follows. Beclin-1-C 35 kDa localized to mitochondria can promote apoptosis; it induces the mitochondrial translocation of BAX and the release of proapoptotic factors. This is Beclin-1 (BECN1) from Sus scrofa (Pig).